We begin with the raw amino-acid sequence, 297 residues long: B-lymphocyte antigen CD20 (297 aa).

Residues 1–51 lie on the Cytoplasmic side of the membrane; the sequence is MTTPRNSMSGTLPVDPMKSPTAMYPVQKIIPKRMPSVVGPTQNFFMRESKT. S36 is modified (phosphoserine). A helical membrane pass occupies residues 52–72; it reads LGAVQIMNGLFHIALGSLLMI. Over 73–75 the chain is Extracellular; sequence HTD. A helical transmembrane segment spans residues 76-96; the sequence is VCAPICITMWYPLWGGIMFII. The Cytoplasmic portion of the chain corresponds to 97-122; that stretch reads SGSLLAAADKNPRKSLVKGKMIMNSL. The helical transmembrane segment at 123 to 143 threads the bilayer; sequence SLFAAISGIIFLIMDIFNITI. At 144–188 the chain is on the extracellular side; sequence SHFFKMENLNLIKAPMPYVDIHNCDPANPSEKNSLSIQYCGSIRS. The helical transmembrane segment at 189-209 threads the bilayer; that stretch reads VFLGVFAVMLIFAFFQKLVTA. Over 210–297 the chain is Cytoplasmic; that stretch reads GIVENEWKKL…SSPIENDSIP (88 aa). A lipid anchor (S-palmitoyl cysteine) is attached at C220. S225 carries the phosphoserine modification. Residues 274-297 form a disordered region; that stretch reads ELEINFAEPPQEQESSPIENDSIP. Low complexity predominate over residues 281–290; the sequence is EPPQEQESSP.

This sequence belongs to the MS4A family. In terms of assembly, forms homotetramers. Interacts with the heavy and light chains of cell surface IgM, the antigen-binding components of the BCR. Post-translationally, phosphorylated. Might be functionally regulated by protein kinase(s). Expressed in PBMCs and lymph node from healthy dogs, in B-cells of canine lymphoma, but not in T-cell lymphoma cells and non-T and non-B-cell lymphoma cells.

It localises to the cell membrane. Its function is as follows. B-lymphocyte-specific membrane protein that plays a role in the regulation of cellular calcium influx necessary for the development, differentiation, and activation of B-lymphocytes. Functions as a store-operated calcium (SOC) channel component promoting calcium influx after activation by the B-cell receptor/BCR. The polypeptide is B-lymphocyte antigen CD20 (MS4A1) (Canis lupus familiaris (Dog)).